We begin with the raw amino-acid sequence, 147 residues long: Large ribosomal subunit protein uL13 (147 aa).

This sequence belongs to the universal ribosomal protein uL13 family. As to quaternary structure, part of the 50S ribosomal subunit.

Functionally, this protein is one of the early assembly proteins of the 50S ribosomal subunit, although it is not seen to bind rRNA by itself. It is important during the early stages of 50S assembly. This Rhodococcus jostii (strain RHA1) protein is Large ribosomal subunit protein uL13.